A 235-amino-acid chain; its full sequence is Orotidine 5'-phosphate decarboxylase (235 aa).

Substrate-binding positions include D12, K34, 61–70 (DLKFHDIPNT), T121, R182, Q191, G211, and R212. The active-site Proton donor is the K63.

This sequence belongs to the OMP decarboxylase family. Type 1 subfamily. In terms of assembly, homodimer.

It carries out the reaction orotidine 5'-phosphate + H(+) = UMP + CO2. It participates in pyrimidine metabolism; UMP biosynthesis via de novo pathway; UMP from orotate: step 2/2. Functionally, catalyzes the decarboxylation of orotidine 5'-monophosphate (OMP) to uridine 5'-monophosphate (UMP). The sequence is that of Orotidine 5'-phosphate decarboxylase from Marinomonas sp. (strain MWYL1).